The sequence spans 297 residues: Cell division protein FtsX (297 aa).

The Cytoplasmic portion of the chain corresponds to 1–24 (MKAKTLSRHLREGVKNLSRNGWMT). The helical transmembrane segment at 25–45 (FASVSAVTVTLLLVGVFLTAI) threads the bilayer. The Extracellular portion of the chain corresponds to 46-171 (MNMNHFATKV…LFDTVKTGRN (126 aa)). The helical transmembrane segment at 172–192 (IGIVLIAGLLFTAMFLISNTI) threads the bilayer. Over 193–219 (KITIYARSTEIEIMKLVGATNWFIRWP) the chain is Cytoplasmic. A helical transmembrane segment spans residues 220–240 (FLLEGLFLGVLGSIIPIGLIL). Residues 241-270 (VTYNSLQGMFNEKLGGTIFELLPYSPFVFQ) lie on the Extracellular side of the membrane. Residues 271–291 (LAGLLVLIGALIGMWGSVMSI) form a helical membrane-spanning segment. Residues 292–297 (RRFLKV) are Cytoplasmic-facing.

Belongs to the ABC-4 integral membrane protein family. FtsX subfamily. As to quaternary structure, interacts with FtsE.

It localises to the cell membrane. Its function is as follows. Part of the ABC transporter FtsEX involved in asymmetric cellular division facilitating the initiation of sporulation. In Bacillus anthracis, this protein is Cell division protein FtsX.